A 105-amino-acid polypeptide reads, in one-letter code: Small ribosomal subunit protein eS10A (105 aa).

Belongs to the eukaryotic ribosomal protein eS10 family. Component of the small ribosomal subunit (SSU). Mature yeast ribosomes consist of a small (40S) and a large (60S) subunit. The 40S small subunit contains 1 molecule of ribosomal RNA (18S rRNA) and 33 different proteins (encoded by 57 genes). The large 60S subunit contains 3 rRNA molecules (25S, 5.8S and 5S rRNA) and 46 different proteins (encoded by 81 genes). eS10 interacts with GCN1 (via middle region); this interaction is direct and promotes GCN2 kinase activity. The N-terminus is not modified.

The protein resides in the cytoplasm. Component of the ribosome, a large ribonucleoprotein complex responsible for the synthesis of proteins in the cell. The small ribosomal subunit (SSU) binds messenger RNAs (mRNAs) and translates the encoded message by selecting cognate aminoacyl-transfer RNA (tRNA) molecules. The large subunit (LSU) contains the ribosomal catalytic site termed the peptidyl transferase center (PTC), which catalyzes the formation of peptide bonds, thereby polymerizing the amino acids delivered by tRNAs into a polypeptide chain. The nascent polypeptides leave the ribosome through a tunnel in the LSU and interact with protein factors that function in enzymatic processing, targeting, and the membrane insertion of nascent chains at the exit of the ribosomal tunnel. eS10 plays a role as a positive regulator of the GCN2 kinase activity by stimulating GCN1-mediated GCN2 activation. This Saccharomyces cerevisiae (strain ATCC 204508 / S288c) (Baker's yeast) protein is Small ribosomal subunit protein eS10A.